A 349-amino-acid polypeptide reads, in one-letter code: Crinkler effector protein 5 (349 aa).

The signal sequence occupies residues 1-17 (MVKLFCSIVGVAGSPFS). The segment at 18-57 (VEVNEGKTVDDLKKAIKAENLDDPTLRNVAPKNLQLFLAK) is LQLFLAK domain. A DWL domain region spans residues 58–108 (KGDAWLRYNEDLDTYLQSEIDTSSYLHMRASWKLSKPTLFGPDVSLGEDVV). The short motif at 109-115 (HVLVVVP) is the HVLVXXP motif element.

It belongs to the Crinkler effector family.

Its subcellular location is the secreted. The protein localises to the host nucleus. Functionally, secreted effector that elicits necrosis in host plants, a characteristic of plant innate immunity. In Phytophthora infestans (Potato late blight agent), this protein is Crinkler effector protein 5.